Reading from the N-terminus, the 559-residue chain is Poly(3-hydroxyalkanoate) polymerase 1 (559 aa).

Cys-296 is a catalytic residue.

It belongs to the PHA/PHB synthase family. Type II PhaC subfamily.

The protein operates within biopolymer metabolism; poly-(R)-3-hydroxybutanoate biosynthesis. Its function is as follows. Synthesizes poly(3-hydroxyalkanoates) (PHA), complements a mutant of P.putida that does not make PHA. The chain is Poly(3-hydroxyalkanoate) polymerase 1 from Ectopseudomonas oleovorans (Pseudomonas oleovorans).